A 186-amino-acid polypeptide reads, in one-letter code: Threonylcarbamoyl-AMP synthase (186 aa).

Positions 3-186 (ILSLSECVDR…IINGSLIRHG (184 aa)) constitute a YrdC-like domain.

Belongs to the SUA5 family. TsaC subfamily.

The protein resides in the cytoplasm. The enzyme catalyses L-threonine + hydrogencarbonate + ATP = L-threonylcarbamoyladenylate + diphosphate + H2O. Required for the formation of a threonylcarbamoyl group on adenosine at position 37 (t(6)A37) in tRNAs that read codons beginning with adenine. Catalyzes the conversion of L-threonine, HCO(3)(-)/CO(2) and ATP to give threonylcarbamoyl-AMP (TC-AMP) as the acyladenylate intermediate, with the release of diphosphate. The polypeptide is Threonylcarbamoyl-AMP synthase (Buchnera aphidicola subsp. Baizongia pistaciae (strain Bp)).